The following is a 201-amino-acid chain: Cell division protein SepF (201 aa).

Residues 27 to 38 show a composition bias toward basic and acidic residues; it reads VQERTSVQRDSR. Residues 27 to 99 form a disordered region; it reads VQERTSVQRD…PRVQNKDSVR (73 aa). Over residues 43–54 the composition is skewed to polar residues; it reads QEASQRSHMTNS. The segment covering 72 to 81 has biased composition (basic and acidic residues); sequence NRQERQRVQR. The segment covering 83–92 has biased composition (polar residues); it reads NAYQQATPRV.

Belongs to the SepF family. In terms of assembly, homodimer. Interacts with FtsZ.

The protein localises to the cytoplasm. Cell division protein that is part of the divisome complex and is recruited early to the Z-ring. Probably stimulates Z-ring formation, perhaps through the cross-linking of FtsZ protofilaments. Its function overlaps with FtsA. The sequence is that of Cell division protein SepF from Streptococcus agalactiae serotype V (strain ATCC BAA-611 / 2603 V/R).